A 267-amino-acid polypeptide reads, in one-letter code: UPF0246 protein Dshi_3333 (267 aa).

This sequence belongs to the UPF0246 family.

The polypeptide is UPF0246 protein Dshi_3333 (Dinoroseobacter shibae (strain DSM 16493 / NCIMB 14021 / DFL 12)).